Reading from the N-terminus, the 389-residue chain is Pyruvate dehydrogenase E1 component subunit alpha-1, mitochondrial (389 aa).

A mitochondrion-targeting transit peptide spans 1–32 (MALSRLSSRSNIITRPFSAAFSRLISTDTTPI). Pyruvate-binding residues include histidine 90, tyrosine 116, arginine 117, glycine 165, valine 167, aspartate 196, glycine 197, alanine 198, asparagine 225, and tyrosine 227. The thiamine diphosphate site is built by tyrosine 116, arginine 117, glycine 165, valine 167, aspartate 196, glycine 197, alanine 198, and asparagine 225. Mg(2+) is bound at residue aspartate 196. 2 residues coordinate Mg(2+): asparagine 225 and tyrosine 227. Position 291 (histidine 291) interacts with thiamine diphosphate.

Tetramer of 2 alpha and 2 beta subunits. Requires thiamine diphosphate as cofactor. The cofactor is Mg(2+). Expressed in roots, rosettes and flowers.

It is found in the mitochondrion matrix. The enzyme catalyses N(6)-[(R)-lipoyl]-L-lysyl-[protein] + pyruvate + H(+) = N(6)-[(R)-S(8)-acetyldihydrolipoyl]-L-lysyl-[protein] + CO2. Its activity is regulated as follows. E1 activity is regulated by phosphorylation (inactivation) and dephosphorylation (activation) of the alpha subunit. Functionally, the pyruvate dehydrogenase complex catalyzes the overall conversion of pyruvate to acetyl-CoA and CO(2). It contains multiple copies of three enzymatic components: pyruvate dehydrogenase (E1), dihydrolipoamide acetyltransferase (E2) and lipoamide dehydrogenase (E3). The polypeptide is Pyruvate dehydrogenase E1 component subunit alpha-1, mitochondrial (E1 ALPHA) (Arabidopsis thaliana (Mouse-ear cress)).